The following is a 147-amino-acid chain: Plasminogen receptor (KT) (147 aa).

The Extracellular segment spans residues 1–52 (MGFIFSKSMNENMKNQQEFMVMHARLQLERQLIMQNEMRERQMAMQIAWSRE). The helical transmembrane segment at 53–73 (FLKYFGTFFGIATISLAAGAI) threads the bilayer. Residues 74-78 (KRKKP) lie on the Cytoplasmic side of the membrane. The chain crosses the membrane as a helical span at residues 79–99 (AFLIPIVPLSFIFTYQYDLGY). At 100-147 (GTLLQRMKSEAEDILETEKTKLELPKGLITFESLEKARREQSKFFSDK) the chain is on the extracellular side.

In terms of assembly, interacts with PLAT. Interacts with PLAUR. As to expression, expressed in adrenal medulla (pheochromocytoma).

Its subcellular location is the cell membrane. Receptor for plasminogen. Regulates urokinase plasminogen activator-dependent and stimulates tissue-type plasminogen activator-dependent cell surface plasminogen activation. Proposed to be part of a local catecholaminergic cell plasminogen activation system that regulates neuroendocrine prohormone processing. Involved in regulation of inflammatory response; regulates monocyte chemotactic migration and matrix metalloproteinase activation, such as of MMP2 and MMP9. The sequence is that of Plasminogen receptor (KT) (Plgrkt) from Rattus norvegicus (Rat).